The following is a 359-amino-acid chain: tRNA/tmRNA (uracil-C(5))-methyltransferase (359 aa).

Gln183, Tyr211, Asn216, Glu232, and Asp292 together coordinate S-adenosyl-L-methionine. The active-site Nucleophile is the Cys317. The active-site Proton acceptor is the Glu351.

Belongs to the class I-like SAM-binding methyltransferase superfamily. RNA M5U methyltransferase family. TrmA subfamily.

The catalysed reaction is uridine(54) in tRNA + S-adenosyl-L-methionine = 5-methyluridine(54) in tRNA + S-adenosyl-L-homocysteine + H(+). It carries out the reaction uridine(341) in tmRNA + S-adenosyl-L-methionine = 5-methyluridine(341) in tmRNA + S-adenosyl-L-homocysteine + H(+). Dual-specificity methyltransferase that catalyzes the formation of 5-methyluridine at position 54 (m5U54) in all tRNAs, and that of position 341 (m5U341) in tmRNA (transfer-mRNA). The protein is tRNA/tmRNA (uracil-C(5))-methyltransferase of Pseudomonas fluorescens (strain Pf0-1).